The following is a 234-amino-acid chain: UPF0502 protein BTH_II0990 (234 aa).

Belongs to the UPF0502 family.

This chain is UPF0502 protein BTH_II0990, found in Burkholderia thailandensis (strain ATCC 700388 / DSM 13276 / CCUG 48851 / CIP 106301 / E264).